The chain runs to 191 residues: MAP6 domain-containing protein 1 (191 aa).

S-palmitoyl cysteine attachment occurs at residues Cys5, Cys10, and Cys11. The tract at residues 31-106 is disordered; the sequence is HGYSDPGSEE…RGQSSAPPTR (76 aa). 2 positions are modified to phosphoserine: Ser38 and Ser41. Mn stretches follow at residues 123 to 136 and 158 to 170; these read TTSYRQEFQAWTGV and DPSPGASFQVPEV. Ser160 carries the phosphoserine modification.

It belongs to the STOP family. As to quaternary structure, interacts with calmodulin. Palmitoylated. Palmitoylation enhances association with microtubules. As to expression, expressed in brain. Found in neurons in primary cultures, but absent in glial cells.

It localises to the golgi apparatus. It is found in the cytoplasm. Its subcellular location is the cytoskeleton. In terms of biological role, may have microtubule-stabilizing activity. The chain is MAP6 domain-containing protein 1 (Map6d1) from Mus musculus (Mouse).